The sequence spans 100 residues: Small ribosomal subunit protein uS14 (100 aa).

Belongs to the universal ribosomal protein uS14 family. As to quaternary structure, part of the 30S ribosomal subunit. Contacts proteins S3 and S10.

In terms of biological role, binds 16S rRNA, required for the assembly of 30S particles and may also be responsible for determining the conformation of the 16S rRNA at the A site. In Prochlorococcus marinus subsp. pastoris (strain CCMP1986 / NIES-2087 / MED4), this protein is Small ribosomal subunit protein uS14.